We begin with the raw amino-acid sequence, 511 residues long: Alpha-amylase 1A (511 aa).

An N-terminal signal peptide occupies residues 1–15; sequence MKLFWLLFTIGFCWA. Pyrrolidone carboxylic acid is present on Q16. Cystine bridges form between C43–C101, C85–C130, and C156–C175. The Ca(2+) site is built by N115, R173, and D182. R210 lines the chloride pocket. D212 (nucleophile) is an active-site residue. H216 contributes to the Ca(2+) binding site. The Proton donor role is filled by E248. Chloride-binding residues include N313 and R352. Residue N365 is modified to Deamidated asparagine; partial. C393 and C399 are oxidised to a cystine. At N427 the chain carries Deamidated asparagine; partial; alternate. N427 carries N-linked (GlcNAc...) asparagine glycosylation. The cysteines at positions 465 and 477 are disulfide-linked. Deamidated asparagine; partial is present on N474. N476 is a glycosylation site (N-linked (GlcNAc...) asparagine).

It belongs to the glycosyl hydrolase 13 family. Monomer. Ca(2+) is required as a cofactor. It depends on chloride as a cofactor.

It localises to the secreted. It catalyses the reaction Endohydrolysis of (1-&gt;4)-alpha-D-glucosidic linkages in polysaccharides containing three or more (1-&gt;4)-alpha-linked D-glucose units.. Functionally, calcium-binding enzyme that initiates starch digestion in the oral cavity. Catalyzes the hydrolysis of internal (1-&gt;4)-alpha-D-glucosidic bonds, yielding a mixture of maltose, isomaltose, small amounts of glucose as well as small linear and branched oligosaccharides called dextrins. The polypeptide is Alpha-amylase 1A (Homo sapiens (Human)).